The chain runs to 254 residues: Isoprenyl transferase (254 aa).

The active site involves D12. Residue D12 coordinates Mg(2+). Substrate contacts are provided by residues 13 to 16 (GNGR), W17, R25, H29, and 57 to 59 (SSE). The active-site Proton acceptor is N60. Residues W61, R63, R180, and 186 to 188 (RLS) contribute to the substrate site. Mg(2+) is bound at residue E199.

It belongs to the UPP synthase family. In terms of assembly, homodimer. Requires Mg(2+) as cofactor.

Catalyzes the condensation of isopentenyl diphosphate (IPP) with allylic pyrophosphates generating different type of terpenoids. This is Isoprenyl transferase from Brucella abortus biovar 1 (strain 9-941).